A 179-amino-acid chain; its full sequence is ATP synthase subunit delta (179 aa).

The protein belongs to the ATPase delta chain family. F-type ATPases have 2 components, F(1) - the catalytic core - and F(0) - the membrane proton channel. F(1) has five subunits: alpha(3), beta(3), gamma(1), delta(1), epsilon(1). F(0) has three main subunits: a(1), b(2) and c(10-14). The alpha and beta chains form an alternating ring which encloses part of the gamma chain. F(1) is attached to F(0) by a central stalk formed by the gamma and epsilon chains, while a peripheral stalk is formed by the delta and b chains.

The protein localises to the cell membrane. Functionally, f(1)F(0) ATP synthase produces ATP from ADP in the presence of a proton or sodium gradient. F-type ATPases consist of two structural domains, F(1) containing the extramembraneous catalytic core and F(0) containing the membrane proton channel, linked together by a central stalk and a peripheral stalk. During catalysis, ATP synthesis in the catalytic domain of F(1) is coupled via a rotary mechanism of the central stalk subunits to proton translocation. This protein is part of the stalk that links CF(0) to CF(1). It either transmits conformational changes from CF(0) to CF(1) or is implicated in proton conduction. This Staphylococcus haemolyticus (strain JCSC1435) protein is ATP synthase subunit delta.